Reading from the N-terminus, the 690-residue chain is uncharacterized protein (690 aa).

This is an uncharacterized protein from Acanthamoeba polyphaga mimivirus (APMV).